The primary structure comprises 490 residues: RNA-binding post-transcriptional regulator cip1 (490 aa).

Disordered stretches follow at residues 16–63 (RGLA…GSSA), 76–97 (ASSR…YSQL), and 138–199 (HNVS…GEDT). Residues 34–62 (RLQSPLNSPKLQPIGSPQASRKTSGSGSS) are compositionally biased toward polar residues. Ser37, Ser41, Ser49, Ser86, and Ser141 each carry phosphoserine. 2 stretches are compositionally biased toward low complexity: residues 76–88 (ASSR…PSDS) and 141–160 (SPPS…ASGK). A compositionally biased stretch (polar residues) spans 164–192 (ADTSAEPSLDAFNSTQIKAGSTANSNSTP). Residues 202–280 (TAIVVKNIPF…RRLRVEWKRQ (79 aa)) form the RRM domain. Residues Ser397, Ser401, and Ser427 each carry the phosphoserine modification. Thr431 is subject to Phosphothreonine. Phosphoserine is present on residues Ser435, Ser456, and Ser466. The interval 457–490 (PLQKASTLSSPFNSKNDNDASTSASKQSFGVSHF) is disordered.

As to quaternary structure, interacts with csx1. Phosphorylated by sty1.

It is found in the cytoplasm. In terms of biological role, regulates global gene expression after oxidative stress. Interacts and stabilizes mRNAs and may regulate their transition between different cytoplasmic components after oxidative stress. This is RNA-binding post-transcriptional regulator cip1 (cip1) from Schizosaccharomyces pombe (strain 972 / ATCC 24843) (Fission yeast).